We begin with the raw amino-acid sequence, 677 residues long: uncharacterized protein (677 aa).

Residues 1–87 (MGRHSKPDPE…PTGAEPIAAA (87 aa)) form a disordered region. Basic and acidic residues predominate over residues 17–29 (SDGHAAEQQHWED). A compositionally biased stretch (low complexity) spans 51–64 (GHYSAVGGYSASGS). A run of 4 helical transmembrane segments spans residues 115 to 135 (VSIG…GVIL), 192 to 212 (VAVA…IGKW), 313 to 333 (EAVA…IGAV), and 474 to 494 (ATLA…IMLD).

It is found in the cell membrane. This is an uncharacterized protein from Mycobacterium tuberculosis (strain CDC 1551 / Oshkosh).